The chain runs to 367 residues: Quinolinate synthase (367 aa).

Positions 45 and 62 each coordinate iminosuccinate. [4Fe-4S] cluster is bound at residue Cys-109. Residues 140 to 142 and Ser-161 contribute to the iminosuccinate site; that span reads YVN. Residue Cys-229 participates in [4Fe-4S] cluster binding. Residues 255–257 and Thr-272 each bind iminosuccinate; that span reads HPE. Cys-319 contacts [4Fe-4S] cluster.

Belongs to the quinolinate synthase family. Type 3 subfamily. [4Fe-4S] cluster serves as cofactor.

The protein localises to the cytoplasm. It catalyses the reaction iminosuccinate + dihydroxyacetone phosphate = quinolinate + phosphate + 2 H2O + H(+). The protein operates within cofactor biosynthesis; NAD(+) biosynthesis; quinolinate from iminoaspartate: step 1/1. Functionally, catalyzes the condensation of iminoaspartate with dihydroxyacetone phosphate to form quinolinate. The protein is Quinolinate synthase of Geobacillus thermodenitrificans (strain NG80-2).